The following is a 383-amino-acid chain: Ceramide synthase 3 (383 aa).

Residues 32–52 (VFVKASHLYITIPYAFLLMVV) form a helical membrane-spanning segment. The homeobox-like stretch occupies residues 66-127 (NALGIKKTQH…RIRQKQNKPC (62 aa)). The region spanning 130 to 331 (QKFQESCWRF…ILKMLNRCIF (202 aa)) is the TLC domain. 5 helical membrane passes run 139-159 (FTFY…KPWA), 174-194 (LLPS…SLVF), 205-225 (FLAH…SWCA), 263-283 (LFFI…PFWI), and 302-322 (IFLN…GYFI). Residues 323-383 (LKMLNRCIFT…HLIANGQHGR (61 aa)) lie on the Cytoplasmic side of the membrane. Ser340 carries the phosphoserine modification. Positions 340–383 (SDNEEEEEEEEEEEAESTKGKETEYLKNGLGTNRHLIANGQHGR) are disordered. The span at 342–354 (NEEEEEEEEEEEA) shows a compositional bias: acidic residues. A compositionally biased stretch (basic and acidic residues) spans 355-364 (ESTKGKETEY).

In terms of tissue distribution, predominantly expressed in testis. In skin, present in the upper stratum spinosum and stratum granulosum (at protein level).

It is found in the endoplasmic reticulum membrane. The enzyme catalyses a very long-chain fatty acyl-CoA + a sphingoid base = an N-(very-long-chain fatty acyl)-sphingoid base + CoA + H(+). The catalysed reaction is docosanoyl-CoA + sphinganine = N-docosanoylsphinganine + CoA + H(+). It catalyses the reaction tetracosanoyl-CoA + sphinganine = N-tetracosanoylsphinganine + CoA + H(+). It carries out the reaction hexacosanoyl-CoA + sphinganine = N-hexacosanoylsphinganine + CoA + H(+). The enzyme catalyses 2-hydroxydocosanoyl-CoA + sphinganine = N-(2-hydroxydocosanoyl)-sphinganine + CoA + H(+). The catalysed reaction is 2-hydroxytetracosanoyl-CoA + sphinganine = N-(2-hydroxytetracosanoyl)-sphinganine + CoA + H(+). It catalyses the reaction an ultra-long-chain fatty acyl-CoA + a sphingoid base = an N-(ultra-long-chain-acyl)-sphingoid base + CoA + H(+). It carries out the reaction octacosanoyl-CoA + sphinganine = N-(octacosanoyl)-sphinganine + CoA + H(+). The enzyme catalyses a fatty acyl-CoA + sphing-4-enine = an N-acylsphing-4-enine + CoA + H(+). The catalysed reaction is sphinganine + octadecanoyl-CoA = N-(octadecanoyl)-sphinganine + CoA + H(+). It catalyses the reaction 2-hydroxyoctadecanoyl-CoA + sphinganine = N-(2-hydroxyoctadecanoyl)-sphinganine + CoA + H(+). It participates in lipid metabolism; sphingolipid metabolism. In terms of biological role, ceramide synthase that catalyzes the transfer of the acyl chain from acyl-CoA to a sphingoid base, with high selectivity toward very- and ultra-long-chain fatty acyl-CoA (chain length greater than C22). N-acylates sphinganine and sphingosine bases to form dihydroceramides and ceramides in de novo synthesis and salvage pathways, respectively. It is crucial for the synthesis of ultra-long-chain ceramides in the epidermis, to maintain epidermal lipid homeostasis and terminal differentiation. The protein is Ceramide synthase 3 of Mus musculus (Mouse).